Reading from the N-terminus, the 384-residue chain is ATP phosphoribosyltransferase regulatory subunit (384 aa).

This sequence belongs to the class-II aminoacyl-tRNA synthetase family. HisZ subfamily. As to quaternary structure, heteromultimer composed of HisG and HisZ subunits.

It localises to the cytoplasm. Its pathway is amino-acid biosynthesis; L-histidine biosynthesis; L-histidine from 5-phospho-alpha-D-ribose 1-diphosphate: step 1/9. Its function is as follows. Required for the first step of histidine biosynthesis. May allow the feedback regulation of ATP phosphoribosyltransferase activity by histidine. This is ATP phosphoribosyltransferase regulatory subunit from Rhodospirillum rubrum (strain ATCC 11170 / ATH 1.1.1 / DSM 467 / LMG 4362 / NCIMB 8255 / S1).